The primary structure comprises 39 residues: Omega-actinopoditoxin-Mb1a (39 aa).

Cystine bridges form between C4-C19, C11-C30, and C18-C38.

In terms of processing, contains 3 disulfide bonds. Expressed by the venom gland.

The protein localises to the secreted. Functionally, potent inhibitor of insect, but not mammalian, voltage-gated calcium channels (Cav). This chain is Omega-actinopoditoxin-Mb1a, found in Missulena bradleyi (Eastern mouse spider).